Reading from the N-terminus, the 456-residue chain is Probable mannan endo-1,4-beta-mannosidase F (456 aa).

The N-terminal stretch at 1–18 (MRPLSSAALLSAIGAVAA) is a signal peptide. In terms of domain architecture, CBM1 spans 19 to 54 (QVGPWGQCGGQSYTGGTSCVSGWACVFLNDWYSQCQ). The tract at residues 79-110 (STSVSATAPPSSTSSSTASVSSSTSSTPIPTS) is disordered. The segment at 79-113 (STSVSATAPPSSTSSSTASVSSSTSSTPIPTSSGS) is ser-rich linker. The catalytic stretch occupies residues 114–456 (FVKAEGLKFN…CAVIDHVSRI (343 aa)). The substrate site is built by W166 and N280. The Proton donor role is filled by E281. A substrate-binding site is contributed by Y356. E390 acts as the Nucleophile in catalysis. W420 is a binding site for substrate.

This sequence belongs to the glycosyl hydrolase 5 (cellulase A) family.

It is found in the secreted. The catalysed reaction is Random hydrolysis of (1-&gt;4)-beta-D-mannosidic linkages in mannans, galactomannans and glucomannans.. In terms of biological role, endo-1,4-mannanase, a crucial enzyme for depolymerization of seed galactomannans and wood galactoglucomannans. The sequence is that of Probable mannan endo-1,4-beta-mannosidase F (manF) from Neosartorya fischeri (strain ATCC 1020 / DSM 3700 / CBS 544.65 / FGSC A1164 / JCM 1740 / NRRL 181 / WB 181) (Aspergillus fischerianus).